We begin with the raw amino-acid sequence, 359 residues long: Phospho-N-acetylmuramoyl-pentapeptide-transferase (359 aa).

The next 10 membrane-spanning stretches (helical) occupy residues 3–23 (QILFAAGIALAVSILLTPVLI), 53–73 (GGVAILAGLWAGYWGSHLIGI), 84–104 (GLLVLGLTTALGGVGFLDDFI), 117–137 (TAKLVGQLIAAVAFGILALQF), 156–176 (IATVTMGSVVFVAFCYLLVSA), 187–207 (LDGLAAGSMSLVLGAYVIITF), 231–251 (LALICAAGAGACIGFLWWNAA), 255–275 (IFMGDTGSLALGGMLAGLSIT), 283–303 (VVIGALFVAEAASVVIQVAVF), and 330–350 (VIIRFWLLAAIASAIGLALFY).

This sequence belongs to the glycosyltransferase 4 family. MraY subfamily. Mg(2+) serves as cofactor.

It is found in the cell membrane. The catalysed reaction is UDP-N-acetyl-alpha-D-muramoyl-L-alanyl-gamma-D-glutamyl-meso-2,6-diaminopimeloyl-D-alanyl-D-alanine + di-trans,octa-cis-undecaprenyl phosphate = di-trans,octa-cis-undecaprenyl diphospho-N-acetyl-alpha-D-muramoyl-L-alanyl-D-glutamyl-meso-2,6-diaminopimeloyl-D-alanyl-D-alanine + UMP. It functions in the pathway cell wall biogenesis; peptidoglycan biosynthesis. Its function is as follows. Catalyzes the initial step of the lipid cycle reactions in the biosynthesis of the cell wall peptidoglycan: transfers peptidoglycan precursor phospho-MurNAc-pentapeptide from UDP-MurNAc-pentapeptide onto the lipid carrier undecaprenyl phosphate, yielding undecaprenyl-pyrophosphoryl-MurNAc-pentapeptide, known as lipid I. The polypeptide is Phospho-N-acetylmuramoyl-pentapeptide-transferase (Rhodococcus jostii (strain RHA1)).